Reading from the N-terminus, the 186-residue chain is Tumor necrosis factor alpha-induced protein 8-like protein 1 (186 aa).

It belongs to the TNFAIP8 family.

The protein resides in the cytoplasm. The polypeptide is Tumor necrosis factor alpha-induced protein 8-like protein 1 (TNFAIP8L1) (Gallus gallus (Chicken)).